Here is a 223-residue protein sequence, read N- to C-terminus: Deoxyribose-phosphate aldolase (223 aa).

Asp-89 serves as the catalytic Proton donor/acceptor. Lys-152 functions as the Schiff-base intermediate with acetaldehyde in the catalytic mechanism. The Proton donor/acceptor role is filled by Lys-181.

Belongs to the DeoC/FbaB aldolase family. DeoC type 1 subfamily.

The protein resides in the cytoplasm. The enzyme catalyses 2-deoxy-D-ribose 5-phosphate = D-glyceraldehyde 3-phosphate + acetaldehyde. It functions in the pathway carbohydrate degradation; 2-deoxy-D-ribose 1-phosphate degradation; D-glyceraldehyde 3-phosphate and acetaldehyde from 2-deoxy-alpha-D-ribose 1-phosphate: step 2/2. Its function is as follows. Catalyzes a reversible aldol reaction between acetaldehyde and D-glyceraldehyde 3-phosphate to generate 2-deoxy-D-ribose 5-phosphate. The sequence is that of Deoxyribose-phosphate aldolase from Bacillus cereus (strain Q1).